A 595-amino-acid chain; its full sequence is DNA-directed RNA polymerase III subunit RPC3 (595 aa).

Positions 523-544 (LIYDMAEILNRIQDFKLEHKIL) are leucine-zipper.

Belongs to the RNA polymerase beta chain family. As to quaternary structure, component of the RNA polymerase III (Pol III) complex consisting of 17 subunits.

The protein resides in the nucleus. Its function is as follows. DNA-dependent RNA polymerase catalyzes the transcription of DNA into RNA using the four ribonucleoside triphosphates as substrates. Specific core component of RNA polymerase III which synthesizes small RNAs, such as 5S rRNA and tRNAs. The sequence is that of DNA-directed RNA polymerase III subunit RPC3 (RPC82) from Candida albicans (strain SC5314 / ATCC MYA-2876) (Yeast).